The chain runs to 983 residues: Alanine--tRNA ligase, mitochondrial (983 aa).

The N-terminal 24 residues, 1-24 (MTSTTGLRNLTLSFKKQLTTSTRT), are a transit peptide targeting the mitochondrion. Residue S504 is modified to Phosphoserine. Zn(2+)-binding residues include H625, H629, C744, and H748. S975 is subject to Phosphoserine.

It belongs to the class-II aminoacyl-tRNA synthetase family. As to quaternary structure, monomer. It depends on Zn(2+) as a cofactor.

It localises to the cytoplasm. The protein resides in the mitochondrion. The enzyme catalyses tRNA(Ala) + L-alanine + ATP = L-alanyl-tRNA(Ala) + AMP + diphosphate. Catalyzes the attachment of alanine to tRNA(Ala) in a two-step reaction: alanine is first activated by ATP to form Ala-AMP and then transferred to the acceptor end of tRNA(Ala). Also edits incorrectly charged tRNA(Ala) via its editing domain. The protein is Alanine--tRNA ligase, mitochondrial of Saccharomyces cerevisiae (strain ATCC 204508 / S288c) (Baker's yeast).